The chain runs to 368 residues: Quinolinate synthase (368 aa).

Iminosuccinate contacts are provided by histidine 46 and serine 63. A [4Fe-4S] cluster-binding site is contributed by cysteine 110. Residues 141-143 (YVN) and serine 162 each bind iminosuccinate. Residue cysteine 230 participates in [4Fe-4S] cluster binding. Iminosuccinate contacts are provided by residues 256 to 258 (HPE) and threonine 273. Cysteine 320 lines the [4Fe-4S] cluster pocket.

Belongs to the quinolinate synthase family. Type 3 subfamily. In terms of assembly, homotrimer. [4Fe-4S] cluster serves as cofactor.

It localises to the cytoplasm. It catalyses the reaction iminosuccinate + dihydroxyacetone phosphate = quinolinate + phosphate + 2 H2O + H(+). Its pathway is cofactor biosynthesis; NAD(+) biosynthesis; quinolinate from iminoaspartate: step 1/1. In terms of biological role, catalyzes the condensation of iminoaspartate with dihydroxyacetone phosphate to form quinolinate. This chain is Quinolinate synthase, found in Bacillus subtilis (strain 168).